The chain runs to 523 residues: GMP synthase [glutamine-hydrolyzing] (523 aa).

The Glutamine amidotransferase type-1 domain maps to 8-205 (KILILDFGSQ…VVNICGCETK (198 aa)). Cysteine 85 serves as the catalytic Nucleophile. Residues histidine 179 and glutamate 181 contribute to the active site. Residues 206-398 (WTAENIIEDA…LGLPAEMLNR (193 aa)) form the GMPS ATP-PPase domain. Residue 233–239 (SGGVDSS) participates in ATP binding.

In terms of assembly, homodimer.

It carries out the reaction XMP + L-glutamine + ATP + H2O = GMP + L-glutamate + AMP + diphosphate + 2 H(+). It functions in the pathway purine metabolism; GMP biosynthesis; GMP from XMP (L-Gln route): step 1/1. Its function is as follows. Catalyzes the synthesis of GMP from XMP. This chain is GMP synthase [glutamine-hydrolyzing], found in Glaesserella parasuis serovar 5 (strain SH0165) (Haemophilus parasuis).